A 27-amino-acid chain; its full sequence is U18-ctenitoxin-Co1a (27 aa).

It belongs to the u18-CNTX family. In terms of tissue distribution, expressed by the venom gland.

The protein localises to the secreted. Not toxic to mice by intracerebroventricular injection. In Ctenus ornatus (Brazilian spider), this protein is U18-ctenitoxin-Co1a.